The chain runs to 228 residues: ATP synthase F(0) complex subunit a (228 aa).

The next 5 helical transmembrane spans lie at 13–33 (NILA…IFPM), 69–89 (WALI…LGLL), 98–118 (QLSM…LIGL), 139–159 (IPTL…ALGV), and 194–214 (ILLF…ALVF).

The protein belongs to the ATPase A chain family. Component of the ATP synthase complex composed at least of ATP5F1A/subunit alpha, ATP5F1B/subunit beta, ATP5MC1/subunit c (homooctomer), MT-ATP6/subunit a, MT-ATP8/subunit 8, ATP5ME/subunit e, ATP5MF/subunit f, ATP5MG/subunit g, ATP5MK/subunit k, ATP5MJ/subunit j, ATP5F1C/subunit gamma, ATP5F1D/subunit delta, ATP5F1E/subunit epsilon, ATP5PF/subunit F6, ATP5PB/subunit b, ATP5PD/subunit d, ATP5PO/subunit OSCP. ATP synthase complex consists of a soluble F(1) head domain (subunits alpha(3) and beta(3)) - the catalytic core - and a membrane F(0) domain - the membrane proton channel (subunits c, a, 8, e, f, g, k and j). These two domains are linked by a central stalk (subunits gamma, delta, and epsilon) rotating inside the F1 region and a stationary peripheral stalk (subunits F6, b, d, and OSCP). Interacts with DNAJC30; interaction is direct.

The protein resides in the mitochondrion inner membrane. The enzyme catalyses H(+)(in) = H(+)(out). Functionally, subunit a, of the mitochondrial membrane ATP synthase complex (F(1)F(0) ATP synthase or Complex V) that produces ATP from ADP in the presence of a proton gradient across the membrane which is generated by electron transport complexes of the respiratory chain. ATP synthase complex consist of a soluble F(1) head domain - the catalytic core - and a membrane F(1) domain - the membrane proton channel. These two domains are linked by a central stalk rotating inside the F(1) region and a stationary peripheral stalk. During catalysis, ATP synthesis in the catalytic domain of F(1) is coupled via a rotary mechanism of the central stalk subunits to proton translocation. With the subunit c (ATP5MC1), forms the proton-conducting channel in the F(0) domain, that contains two crucial half-channels (inlet and outlet) that facilitate proton movement from the mitochondrial intermembrane space (IMS) into the matrix. Protons are taken up via the inlet half-channel and released through the outlet half-channel, following a Grotthuss mechanism. This chain is ATP synthase F(0) complex subunit a, found in Pelomedusa subrufa (African side-necked turtle).